The primary structure comprises 2016 residues: Cell adhesion molecule Dscam1 (2016 aa).

The N-terminal stretch at 1–28 is a signal peptide; sequence MNMPNERLKWLMLFAAVALIACGSQTLA. Residues 29–1618 are Extracellular-facing; sequence ANPPDADQKG…TIRIILSNLN (1590 aa). Ig-like C2-type domains are found at residues 39–134, 138–230, 247–338, 342–421, 428–522, 527–613, 618–712, 715–807, and 812–904; these read PVFL…VHVR, AQYY…TRLS, PKIN…TVLT, PLSA…AELK, PPVI…AKLN, PYIR…LEVQ, PQVL…LQVN, PRWI…IMIS, and PEFT…ASIN. Asn53 is a glycosylation site (N-linked (GlcNAc...) asparagine). Cys61 and Cys117 are disulfide-bonded. Positions 144, 146, and 161 each coordinate Zn(2+). Intrachain disulfides connect Cys160–Cys217, Cys160–Thr219, Cys160–Lys220, Cys269–Cys322, Pro270–Val323, Ala276–Gly329, Cys364–Cys405, Cys450–Cys506, Cys547–Cys596, Cys640–Cys694, Val641–Cys694, Val641–Ile695, and Cys736–Cys790. An N-linked (GlcNAc...) asparagine glycan is attached at Asn325. Asn492 and Asn577 each carry an N-linked (GlcNAc...) asparagine glycan. An N-linked (GlcNAc...) asparagine glycan is attached at Asn820. Cysteines 833 and 890 form a disulfide. Fibronectin type-III domains are found at residues 913–1007, 1012–1116, 1117–1213, and 1217–1310; these read MPYA…TAEE, KPQN…TPSQ, PPSD…TEPD, and APTD…PSDQ. Asn1022, Asn1055, and Asn1186 each carry an N-linked (GlcNAc...) asparagine glycan. The 83-residue stretch at 1312-1394 folds into the Ig-like C2-type 10 domain; that stretch reads PAKIASFDDT…ENSIAKDSIT (83 aa). The cysteines at positions 1334 and 1382 are disulfide-linked. Fibronectin type-III domains follow at residues 1402–1495 and 1499–1594; these read PPQS…TKGQ and LPEK…TGGT. A helical transmembrane segment spans residues 1619–1639; it reads LVVPVVAALLVIIIAIIVICI. The Cytoplasmic segment spans residues 1640–2016; sequence LRSKGNHHKD…GFTAYDTMAV (377 aa). Residues 1685–1688 carry the PXXP motif 1; SH3-binding motif; sequence PPVP. Residues 1688 to 1719 are disordered; sequence PGSNYNTCDRIKRGRGGLRSNHSTWDPRRNPN. The short motif at 1727–1730 is the PXXP motif 2; SH3-binding element; the sequence is PPVP. Disordered regions lie at residues 1787 to 1846 and 1862 to 2016; these read GHAG…DDPA and SQGG…TMAV. Over residues 1826–1836 the composition is skewed to polar residues; sequence KNSQGGQSSIY. The short motif at 1842 to 1845 is the YXXP motif 1; potential SH2-binding element; sequence YDDP. Residues 1875–1878 carry the YXXP motif 2; potential SH2-binding motif; sequence YDDP. The segment covering 1897–1918 has biased composition (low complexity); the sequence is GQPYDHYGSRGSMGRRSIGSAR. The Polyproline tract (probable SH3-binding) signature appears at 1925–1932; sequence PEPPPPPP. 2 stretches are compositionally biased toward basic and acidic residues: residues 1944–1962 and 1974–1993; these read DSKE…DHGP and QPKD…RNET. A compositionally biased stretch (polar residues) spans 1994–2004; sequence GPKQLQLQQAN.

As to quaternary structure, homodimer (via extracellular region); alternative splicing produces a potential 19,008 different ectodomains and the majority of these show strong isoform-specific homodimerization. Interacts (via cytoplasmic domain) with dock/dreadlocks (via SH2 and SH3 domains); the interaction is direct and may require Dscam1 to be phosphorylated. In terms of processing, phosphorylated on tyrosine residues in the intracellular domain. Tyrosine protein kinase Src42A and possibly Src64B are involved in this phosphorylation. Post-translationally, glycosylation on Asn-53 and Asn-325 is involved in stabilizing dimerization. Proteolytically processed, probably to generate a secreted form. Secreted into the hemolymph (at protein level). Expressed in brain and eye-antennal imaginal disks, including R3/R4 and R7 photoreceptor cells. Individual R3/R4 cells express between 14 and 50 randomly generated mRNAs encoding distinct isoforms.

Its subcellular location is the cell membrane. The protein resides in the cell projection. It is found in the neuron projection. It localises to the axon. The protein localises to the perikaryon. Its subcellular location is the dendrite. The protein resides in the secreted. Cell surface receptor involved in guidance and targeting of growing nerve axons. Required during Bolwig's organ differentiation for accurate and efficient targeting of photoreceptor neuron axons to their synaptic targets in the brain via the P2 intermediate target neuron. Involved in isoneural self-avoidance during dendrite arborization but not in heteroneural recognition and repulsion during tiling by related neurons of the same class. Involved in regulating axon bifurcation and divergent extension in the developing mushroom body. Essential for axon arborisation in ellipsoid body. Exhibits an extraordinary level of molecular diversity resulting from alternative splicing. Isoforms differing in their ectodomain makeup show a high degree of functional redundancy while isoforms with different transmembrane domains are involved in different neuronal morphogenetic processes and are differentially targeted to dendrites or axons. The vast majority of isoforms exhibit strong isoform-specific homophilic binding. Individual cells express a distinct randomly generated repertoire of isoforms. Cell surfaces bearing identical repertoires of Dscam1 isoforms, such as those from the same cell, trigger recognition and avoidance. A subset of isoforms is expressed in fat body cells and hemocytes, cells that are part of the insect immune response, and these isoforms are secreted into the hemolymph. The secreted form comprising the ectodomain can bind to bacteria, such as Escherichia coli, and may act as an opsonin enhancing their phagocytosis by hemocytes. This chain is Cell adhesion molecule Dscam1, found in Drosophila melanogaster (Fruit fly).